Here is a 189-residue protein sequence, read N- to C-terminus: uncharacterized protein (189 aa).

Residues 1–20 (MKFSTVGFLFSTILFKSAFA) form the signal peptide. An EF-hand domain is found at 74–109 (KKNEVLVDVLKKCDPSGNRRITLDEFLAFRKNGGEL). Ca(2+) contacts are provided by aspartate 87, serine 89, asparagine 91, arginine 93, and glutamate 98.

It localises to the endoplasmic reticulum lumen. The protein localises to the golgi apparatus lumen. This is an uncharacterized protein from Schizosaccharomyces pombe (strain 972 / ATCC 24843) (Fission yeast).